A 245-amino-acid polypeptide reads, in one-letter code: 1-(5-phosphoribosyl)-5-[(5-phosphoribosylamino)methylideneamino] imidazole-4-carboxamide isomerase (245 aa).

The active-site Proton acceptor is the D13. D132 serves as the catalytic Proton donor.

It belongs to the HisA/HisF family.

Its subcellular location is the cytoplasm. The enzyme catalyses 1-(5-phospho-beta-D-ribosyl)-5-[(5-phospho-beta-D-ribosylamino)methylideneamino]imidazole-4-carboxamide = 5-[(5-phospho-1-deoxy-D-ribulos-1-ylimino)methylamino]-1-(5-phospho-beta-D-ribosyl)imidazole-4-carboxamide. Its pathway is amino-acid biosynthesis; L-histidine biosynthesis; L-histidine from 5-phospho-alpha-D-ribose 1-diphosphate: step 4/9. In Frankia alni (strain DSM 45986 / CECT 9034 / ACN14a), this protein is 1-(5-phosphoribosyl)-5-[(5-phosphoribosylamino)methylideneamino] imidazole-4-carboxamide isomerase.